A 226-amino-acid chain; its full sequence is NADH-ubiquinone oxidoreductase 19.3 kDa subunit, mitochondrial (226 aa).

A disordered region spans residues 40-68 (ATGAVAPAGAQHGIARRERREVPLPSQEG). [4Fe-4S] cluster-binding residues include Cys-101, Cys-102, Cys-166, and Cys-196.

It belongs to the complex I 20 kDa subunit family. In terms of assembly, complex I is composed of about 40 different subunits. This is a component of the iron-sulfur (IP) fragment of the enzyme. [4Fe-4S] cluster serves as cofactor.

The protein resides in the mitochondrion. It catalyses the reaction a ubiquinone + NADH + 5 H(+)(in) = a ubiquinol + NAD(+) + 4 H(+)(out). Functionally, core subunit of the mitochondrial membrane respiratory chain NADH dehydrogenase (Complex I) that is believed to belong to the minimal assembly required for catalysis. Complex I functions in the transfer of electrons from NADH to the respiratory chain. The immediate electron acceptor for the enzyme is believed to be ubiquinone. The sequence is that of NADH-ubiquinone oxidoreductase 19.3 kDa subunit, mitochondrial from Neurospora crassa (strain ATCC 24698 / 74-OR23-1A / CBS 708.71 / DSM 1257 / FGSC 987).